A 141-amino-acid polypeptide reads, in one-letter code: Nucleoside diphosphate kinase (141 aa).

ATP contacts are provided by K10, F58, R86, T92, R103, and N113. The active-site Pros-phosphohistidine intermediate is H116.

The protein belongs to the NDK family. In terms of assembly, homotetramer. It depends on Mg(2+) as a cofactor.

It is found in the cytoplasm. It carries out the reaction a 2'-deoxyribonucleoside 5'-diphosphate + ATP = a 2'-deoxyribonucleoside 5'-triphosphate + ADP. It catalyses the reaction a ribonucleoside 5'-diphosphate + ATP = a ribonucleoside 5'-triphosphate + ADP. Its function is as follows. Major role in the synthesis of nucleoside triphosphates other than ATP. The ATP gamma phosphate is transferred to the NDP beta phosphate via a ping-pong mechanism, using a phosphorylated active-site intermediate. This chain is Nucleoside diphosphate kinase, found in Ehrlichia canis (strain Jake).